Here is a 562-residue protein sequence, read N- to C-terminus: Arginine--tRNA ligase (562 aa).

The 'HIGH' region signature appears at Pro122–His132.

It belongs to the class-I aminoacyl-tRNA synthetase family. In terms of assembly, monomer.

The protein localises to the cytoplasm. The enzyme catalyses tRNA(Arg) + L-arginine + ATP = L-arginyl-tRNA(Arg) + AMP + diphosphate. The polypeptide is Arginine--tRNA ligase (Chlamydia felis (strain Fe/C-56) (Chlamydophila felis)).